A 438-amino-acid chain; its full sequence is MSEPSKEELLARIAQLELENEQLKQQNGKKSQHEQFNKIDDNFSLDEYKRYGRQMIVPQFGSLESQIKLKNSKVLVVGAGGLGSPALLYLSSAGIGKIGIIDPDTVDTSNLHRQVIHNTEMVGEFKCISAQNYINKLNPHVVVEVYPTALNNDNAFGIVSQYDLVLDCTDHPAVRYLINDVCVLLGKTIVSGSGLKSDGQLTVLNFANSGPCYRCFYPQPPSPDSVTSCSDGGVIGPAIGLVGVAMAVETIKIITGYYTKDNFVPFLASYSAYPQQQLRVFKMRKRQKDCAVCGENPQISQRMIEDGTINYKTFCGRATFDPIDDKFRVSPKDYDSVVQNKKKHILIDVRPREQFQITHLPNAINVQWDPTFRKADAIEQYLPDDSTKDDEIYVVCRFGNDSQLAAKKLIGMGYPNVRDIIGGLDKWSDDVDSKIPKY.

ATP is bound by residues Gly81, Asp102, 109–113 (SNLHR), Lys126, and 170–171 (DH). The Zn(2+) site is built by Cys212 and Cys215. The Glycyl thioester intermediate; for adenylyltransferase activity role is filled by Cys229. Residues Cys290 and Cys293 each coordinate Zn(2+). In terms of domain architecture, Rhodanese spans 340-436 (NKKKHILIDV…WSDDVDSKIP (97 aa)). Catalysis depends on Cys396, which acts as the Cysteine persulfide intermediate; for sulfurtransferase activity.

This sequence in the N-terminal section; belongs to the HesA/MoeB/ThiF family. UBA4 subfamily. Zn(2+) is required as a cofactor.

It localises to the cytoplasm. The protein resides in the cytosol. The protein operates within tRNA modification; 5-methoxycarbonylmethyl-2-thiouridine-tRNA biosynthesis. Functionally, plays a central role in 2-thiolation of mcm(5)S(2)U at tRNA wobble positions of cytosolic tRNA(Lys), tRNA(Glu) and tRNA(Gln). Acts by mediating the C-terminal thiocarboxylation of sulfur carrier URM1. Its N-terminus first activates URM1 as acyl-adenylate (-COAMP), then the persulfide sulfur on the catalytic cysteine is transferred to URM1 to form thiocarboxylation (-COSH) of its C-terminus. The reaction probably involves hydrogen sulfide that is generated from the persulfide intermediate and that acts as a nucleophile towards URM1. Subsequently, a transient disulfide bond is formed. Does not use thiosulfate as sulfur donor; NFS1 probably acting as a sulfur donor for thiocarboxylation reactions. Prior mcm(5) tRNA modification by the elongator complex is required for 2-thiolation. May also be involved in protein urmylation. This chain is Adenylyltransferase and sulfurtransferase UBA4, found in Candida albicans (strain SC5314 / ATCC MYA-2876) (Yeast).